The primary structure comprises 214 residues: Large ribosomal subunit protein uL3 (214 aa).

Residues Gly133–Ala154 are disordered.

It belongs to the universal ribosomal protein uL3 family. Part of the 50S ribosomal subunit. Forms a cluster with proteins L14 and L19.

Its function is as follows. One of the primary rRNA binding proteins, it binds directly near the 3'-end of the 23S rRNA, where it nucleates assembly of the 50S subunit. This is Large ribosomal subunit protein uL3 from Streptomyces avermitilis (strain ATCC 31267 / DSM 46492 / JCM 5070 / NBRC 14893 / NCIMB 12804 / NRRL 8165 / MA-4680).